Reading from the N-terminus, the 111-residue chain is Large ribosomal subunit protein uL22 (111 aa).

Belongs to the universal ribosomal protein uL22 family. Part of the 50S ribosomal subunit.

Its function is as follows. This protein binds specifically to 23S rRNA; its binding is stimulated by other ribosomal proteins, e.g. L4, L17, and L20. It is important during the early stages of 50S assembly. It makes multiple contacts with different domains of the 23S rRNA in the assembled 50S subunit and ribosome. The globular domain of the protein is located near the polypeptide exit tunnel on the outside of the subunit, while an extended beta-hairpin is found that lines the wall of the exit tunnel in the center of the 70S ribosome. This chain is Large ribosomal subunit protein uL22, found in Chlamydia trachomatis serovar L2 (strain ATCC VR-902B / DSM 19102 / 434/Bu).